Here is a 541-residue protein sequence, read N- to C-terminus: Chaperonin GroEL 2 (541 aa).

ATP is bound by residues 30–33 (TLGP), Lys51, 87–91 (DGTTT), Gly415, and Asp496.

The protein belongs to the chaperonin (HSP60) family. As to quaternary structure, forms a cylinder of 14 subunits composed of two heptameric rings stacked back-to-back. Interacts with the co-chaperonin GroES.

It is found in the cytoplasm. The catalysed reaction is ATP + H2O + a folded polypeptide = ADP + phosphate + an unfolded polypeptide.. Its function is as follows. Together with its co-chaperonin GroES, plays an essential role in assisting protein folding. The GroEL-GroES system forms a nano-cage that allows encapsulation of the non-native substrate proteins and provides a physical environment optimized to promote and accelerate protein folding. The polypeptide is Chaperonin GroEL 2 (Gluconacetobacter diazotrophicus (strain ATCC 49037 / DSM 5601 / CCUG 37298 / CIP 103539 / LMG 7603 / PAl5)).